The following is a 555-amino-acid chain: Bicyclo-germacrene synthase (555 aa).

The Mg(2+) site is built by Asp-311 and Glu-315. Residues 311–315 (DDTYE) carry the DDXXD motif motif. Homodimerization stretches follow at residues 316–322 (YATLDEL) and 392–429 (EAKWIYNNSIPTVEEYMKVAFVTCGYMMLSTTSLVGVG). The Mg(2+) site is built by Asp-459 and Glu-467.

Belongs to the terpene synthase family. Homodimer. Requires Mn(2+) as cofactor. It depends on Mg(2+) as a cofactor. As to expression, expressed in peltate glandular trichomes. Present at low levels in flowers, leaves and stems.

It carries out the reaction (2E,6E)-farnesyl diphosphate = bicyclogermacrene + diphosphate. The enzyme catalyses (2E)-geranyl diphosphate = terpinolene + diphosphate. The catalysed reaction is (2E)-geranyl diphosphate = (4R)-limonene + diphosphate. It catalyses the reaction (2E)-geranyl diphosphate + H2O = (2E)-geraniol + diphosphate. It carries out the reaction (2E,6E)-farnesyl diphosphate = allo-aromadendrene + diphosphate. Its pathway is secondary metabolite biosynthesis; terpenoid biosynthesis. Functionally, involved in the biosynthesis of phenolic sesquiterpenes natural products. Sesquiterpene synthase converting (2E,6E)-farnesyl diphosphate (FPP) to alloaromadendrene and bicyclo-germacrene. The product formation is dependent on the metal ions present and in presence of manganese, bicyclo-germacrene is greatly favored while both alloaromadendrene and bicyclo-germacrene are produced in equivalent amounts in the presence of magnesium. Can also convert geranyl diphosphate (GPP) to terpinolene, limonene and geraniol, and this conversion is not affected by the presence of magnesium or manganese. In Origanum vulgare (Wild marjoram), this protein is Bicyclo-germacrene synthase (TPS4).